The following is a 512-amino-acid chain: Cytoplasmic tRNA 2-thiolation protein 2-B (512 aa).

The segment at V196 to R215 is disordered. The span at S199–S214 shows a compositional bias: polar residues.

The protein belongs to the CTU2/NCS2 family.

Its subcellular location is the cytoplasm. It functions in the pathway tRNA modification; 5-methoxycarbonylmethyl-2-thiouridine-tRNA biosynthesis. Plays a central role in 2-thiolation of mcm(5)S(2)U at tRNA wobble positions of tRNA(Lys), tRNA(Glu) and tRNA(Gln). May act by forming a heterodimer with ctu1/atpbd3 that ligates sulfur from thiocarboxylated urm1 onto the uridine of tRNAs at wobble position. The protein is Cytoplasmic tRNA 2-thiolation protein 2-B (ctu2-b) of Xenopus laevis (African clawed frog).